The following is an 81-amino-acid chain: RNA-binding protein Hfq (81 aa).

The region spanning 10-69 (DPFLNTLRKEHVPVSIYLVNGIKLQGQVDSFDQYVILLKNTVTQMVYKHAISTIVPGRAV) is the Sm domain.

Belongs to the Hfq family. As to quaternary structure, homohexamer.

Its function is as follows. RNA chaperone that binds small regulatory RNA (sRNAs) and mRNAs to facilitate mRNA translational regulation in response to envelope stress, environmental stress and changes in metabolite concentrations. Also binds with high specificity to tRNAs. This Methylobacillus flagellatus (strain ATCC 51484 / DSM 6875 / VKM B-1610 / KT) protein is RNA-binding protein Hfq.